A 157-amino-acid polypeptide reads, in one-letter code: SsrA-binding protein (157 aa).

The interval 128-157 is disordered; it reads LARGKKQHDKRAAEKERDWEREKQRVMRRG. The span at 137–157 shows a compositional bias: basic and acidic residues; sequence KRAAEKERDWEREKQRVMRRG.

It belongs to the SmpB family.

It localises to the cytoplasm. Required for rescue of stalled ribosomes mediated by trans-translation. Binds to transfer-messenger RNA (tmRNA), required for stable association of tmRNA with ribosomes. tmRNA and SmpB together mimic tRNA shape, replacing the anticodon stem-loop with SmpB. tmRNA is encoded by the ssrA gene; the 2 termini fold to resemble tRNA(Ala) and it encodes a 'tag peptide', a short internal open reading frame. During trans-translation Ala-aminoacylated tmRNA acts like a tRNA, entering the A-site of stalled ribosomes, displacing the stalled mRNA. The ribosome then switches to translate the ORF on the tmRNA; the nascent peptide is terminated with the 'tag peptide' encoded by the tmRNA and targeted for degradation. The ribosome is freed to recommence translation, which seems to be the essential function of trans-translation. This chain is SsrA-binding protein, found in Methylococcus capsulatus (strain ATCC 33009 / NCIMB 11132 / Bath).